Here is a 469-residue protein sequence, read N- to C-terminus: Ribulose bisphosphate carboxylase large chain (469 aa).

At Lys-8 the chain carries N6,N6,N6-trimethyllysine. Residues Asn-117 and Thr-167 each contribute to the substrate site. The active-site Proton acceptor is Lys-169. Residue Lys-171 coordinates substrate. Positions 195, 197, and 198 each coordinate Mg(2+). Position 195 is an N6-carboxylysine (Lys-195). The active-site Proton acceptor is the His-288. Residues Arg-289, His-321, and Ser-373 each contribute to the substrate site.

It belongs to the RuBisCO large chain family. Type I subfamily. Heterohexadecamer of 8 large chains and 8 small chains; disulfide-linked. The disulfide link is formed within the large subunit homodimers. The cofactor is Mg(2+). The disulfide bond which can form in the large chain dimeric partners within the hexadecamer appears to be associated with oxidative stress and protein turnover.

The protein localises to the plastid. It localises to the chloroplast. It catalyses the reaction 2 (2R)-3-phosphoglycerate + 2 H(+) = D-ribulose 1,5-bisphosphate + CO2 + H2O. The enzyme catalyses D-ribulose 1,5-bisphosphate + O2 = 2-phosphoglycolate + (2R)-3-phosphoglycerate + 2 H(+). In terms of biological role, ruBisCO catalyzes two reactions: the carboxylation of D-ribulose 1,5-bisphosphate, the primary event in carbon dioxide fixation, as well as the oxidative fragmentation of the pentose substrate in the photorespiration process. Both reactions occur simultaneously and in competition at the same active site. The sequence is that of Ribulose bisphosphate carboxylase large chain from Coleonema pulchellum (Confetti bush).